Reading from the N-terminus, the 761-residue chain is 5-methyltetrahydropteroyltriglutamate--homocysteine methyltransferase (761 aa).

5-methyltetrahydropteroyltri-L-glutamate-binding positions include 16–19 (RELK) and K118. Residues 436–438 (IGS) and E489 contribute to the L-homocysteine site. L-methionine is bound by residues 436–438 (IGS) and E489. 5-methyltetrahydropteroyltri-L-glutamate-binding positions include 520–521 (RC) and W566. L-homocysteine is bound at residue D604. D604 provides a ligand contact to L-methionine. 5-methyltetrahydropteroyltri-L-glutamate is bound at residue E610. 3 residues coordinate Zn(2+): H646, C648, and E670. Residue H699 is the Proton donor of the active site. C731 contributes to the Zn(2+) binding site.

The protein belongs to the vitamin-B12 independent methionine synthase family. The cofactor is Zn(2+).

It catalyses the reaction 5-methyltetrahydropteroyltri-L-glutamate + L-homocysteine = tetrahydropteroyltri-L-glutamate + L-methionine. It functions in the pathway amino-acid biosynthesis; L-methionine biosynthesis via de novo pathway; L-methionine from L-homocysteine (MetE route): step 1/1. In terms of biological role, catalyzes the transfer of a methyl group from 5-methyltetrahydrofolate to homocysteine resulting in methionine formation. This is 5-methyltetrahydropteroyltriglutamate--homocysteine methyltransferase from Vibrio cholerae serotype O1 (strain ATCC 39315 / El Tor Inaba N16961).